A 144-amino-acid polypeptide reads, in one-letter code: Protein archease (144 aa).

Asp14, Asp143, and Ile144 together coordinate Ca(2+).

The protein belongs to the archease family.

Its function is as follows. Activates the tRNA-splicing ligase complex by facilitating the enzymatic turnover of catalytic subunit RtcB. Acts by promoting the guanylylation of RtcB, a key intermediate step in tRNA ligation. Can also alter the NTP specificity of RtcB such that ATP, dGTP or ITP is used efficiently. In Aeropyrum pernix (strain ATCC 700893 / DSM 11879 / JCM 9820 / NBRC 100138 / K1), this protein is Protein archease.